Here is a 430-residue protein sequence, read N- to C-terminus: Adenosylhomocysteinase (430 aa).

Substrate is bound by residues T56, D131, and E156. 157–159 (TTT) contributes to the NAD(+) binding site. K186 and D190 together coordinate substrate. NAD(+) contacts are provided by residues N191, 220–225 (GFGDVG), E243, N278, 299–301 (IGH), and N344.

This sequence belongs to the adenosylhomocysteinase family. NAD(+) serves as cofactor.

It is found in the cytoplasm. The enzyme catalyses S-adenosyl-L-homocysteine + H2O = L-homocysteine + adenosine. Its pathway is amino-acid biosynthesis; L-homocysteine biosynthesis; L-homocysteine from S-adenosyl-L-homocysteine: step 1/1. In terms of biological role, may play a key role in the regulation of the intracellular concentration of adenosylhomocysteine. The polypeptide is Adenosylhomocysteinase (Halorhodospira halophila (strain DSM 244 / SL1) (Ectothiorhodospira halophila (strain DSM 244 / SL1))).